Here is a 299-residue protein sequence, read N- to C-terminus: Homoserine kinase (299 aa).

Residue 85 to 95 (PMSRGLGSSAT) participates in ATP binding.

The protein belongs to the GHMP kinase family. Homoserine kinase subfamily.

It localises to the cytoplasm. The catalysed reaction is L-homoserine + ATP = O-phospho-L-homoserine + ADP + H(+). It functions in the pathway amino-acid biosynthesis; L-threonine biosynthesis; L-threonine from L-aspartate: step 4/5. Its function is as follows. Catalyzes the ATP-dependent phosphorylation of L-homoserine to L-homoserine phosphate. This is Homoserine kinase from Clostridium novyi (strain NT).